The sequence spans 234 residues: Phosphoribosylformylglycinamidine synthase subunit PurQ (234 aa).

The Glutamine amidotransferase type-1 domain maps to 3-231 (AAVVVFPGSN…ALYLERRKDH (229 aa)). The Nucleophile role is filled by Cys87. Catalysis depends on residues His200 and Glu202.

As to quaternary structure, part of the FGAM synthase complex composed of 1 PurL, 1 PurQ and 2 PurS subunits.

The protein localises to the cytoplasm. It carries out the reaction N(2)-formyl-N(1)-(5-phospho-beta-D-ribosyl)glycinamide + L-glutamine + ATP + H2O = 2-formamido-N(1)-(5-O-phospho-beta-D-ribosyl)acetamidine + L-glutamate + ADP + phosphate + H(+). It catalyses the reaction L-glutamine + H2O = L-glutamate + NH4(+). Its pathway is purine metabolism; IMP biosynthesis via de novo pathway; 5-amino-1-(5-phospho-D-ribosyl)imidazole from N(2)-formyl-N(1)-(5-phospho-D-ribosyl)glycinamide: step 1/2. Part of the phosphoribosylformylglycinamidine synthase complex involved in the purines biosynthetic pathway. Catalyzes the ATP-dependent conversion of formylglycinamide ribonucleotide (FGAR) and glutamine to yield formylglycinamidine ribonucleotide (FGAM) and glutamate. The FGAM synthase complex is composed of three subunits. PurQ produces an ammonia molecule by converting glutamine to glutamate. PurL transfers the ammonia molecule to FGAR to form FGAM in an ATP-dependent manner. PurS interacts with PurQ and PurL and is thought to assist in the transfer of the ammonia molecule from PurQ to PurL. In Pseudothermotoga lettingae (strain ATCC BAA-301 / DSM 14385 / NBRC 107922 / TMO) (Thermotoga lettingae), this protein is Phosphoribosylformylglycinamidine synthase subunit PurQ.